A 112-amino-acid polypeptide reads, in one-letter code: UPF0060 membrane protein AAur_4166 (112 aa).

4 consecutive transmembrane segments (helical) span residues 8–28 (ILFV…WQAV), 33–53 (AWWW…FAAF), 62–82 (VLAA…MLMD), and 91–111 (VIGA…PRPG).

It belongs to the UPF0060 family.

It is found in the cell membrane. In Paenarthrobacter aurescens (strain TC1), this protein is UPF0060 membrane protein AAur_4166.